Consider the following 359-residue polypeptide: Cytohesin-interacting protein (359 aa).

The region spanning 77 to 166 (VVTVEKQDNG…LLTIETLNGT (90 aa)) is the PDZ domain. Residues 165 to 188 (GTMIHRRAELEAKLQTLKQTLKKK) adopt a coiled-coil conformation. Residues 166–188 (TMIHRRAELEAKLQTLKQTLKKK) are interaction with CYTH1.

Interacts with CYTH1 and SNX27.

The protein resides in the cytoplasm. Its subcellular location is the early endosome. Its function is as follows. By its binding to cytohesin-1 (CYTH1), it modifies activation of ARFs by CYTH1 and its precise function may be to sequester CYTH1 in the cytoplasm. This chain is Cytohesin-interacting protein (Cytip), found in Mus musculus (Mouse).